The chain runs to 268 residues: Hydroxyethylthiazole kinase (268 aa).

Residue M45 participates in substrate binding. Residues R121 and T167 each contribute to the ATP site. Substrate is bound at residue G194.

Belongs to the Thz kinase family. Mg(2+) is required as a cofactor.

It carries out the reaction 5-(2-hydroxyethyl)-4-methylthiazole + ATP = 4-methyl-5-(2-phosphooxyethyl)-thiazole + ADP + H(+). It participates in cofactor biosynthesis; thiamine diphosphate biosynthesis; 4-methyl-5-(2-phosphoethyl)-thiazole from 5-(2-hydroxyethyl)-4-methylthiazole: step 1/1. Catalyzes the phosphorylation of the hydroxyl group of 4-methyl-5-beta-hydroxyethylthiazole (THZ). This is Hydroxyethylthiazole kinase from Bacillus thuringiensis subsp. konkukian (strain 97-27).